The following is a 703-amino-acid chain: Stonustoxin subunit alpha (703 aa).

Residues 2 to 265 (SSDLVMPALG…KAQQLIQEIN (264 aa)) are structural MACPF/CDC pore-forming domain. The tract at residues 266–385 (VSKVRRIHTT…GMVEGTQAKF (120 aa)) is structural FAT domain. The thioredoxin (THX) domain stretch occupies residues 386 to 517 (VSNQTELDRE…PRMPFVQGYK (132 aa)). Residues 508-703 (PRMPFVQGYK…AGNHGTLRLL (196 aa)) form the B30.2/SPRY domain.

It belongs to the SNTX/VTX toxin family. Heterodimer of alpha and beta subunits; non-covalently linked. Intrachain disulfide bonds may be present in the heterodimer. In terms of processing, not glycosylated. Expressed by the venom gland.

The protein resides in the secreted. Its function is as follows. This lethal (towards mammals) heterodimer induces hemolytic activities due to its ability to form pores in the cell membrane. The pore may be composed of 10 SNTX-alpha/beta heterodimers. The toxin elicits potent hypotension which is endothelium-dependent and appears to be mediated by the nitric oxide pathway and activation of potassium channels. In addition, it displays edema-inducing activities, increases vascular permeability. It also shows myotoxic activities and interferes irreversibly with neuromuscular function. It also induces irreversible platelet aggregation in rabbit or rat (but not in human or mouse) whole blood. In addition, it has been observed to increase spontaneous quantal acetylcholine release from isolated frog cutaneous pectoris motor endings. This Synanceia horrida (Estuarine stonefish) protein is Stonustoxin subunit alpha.